Consider the following 102-residue polypeptide: Protein ORF28 (102 aa).

A helical membrane pass occupies residues 28–48 (VIGLITVLFLLVIGACVYCCI).

The protein resides in the host membrane. The protein is Protein ORF28 (ORF28) of Homo sapiens (Human).